The sequence spans 324 residues: 2-dehydro-3-deoxygluconokinase (324 aa).

Substrate-binding positions include 35 to 39 (GAESN), 106 to 108 (YYR), and Arg-170. Residues 168 to 170 (NVR), 228 to 233 (KLGKEG), and 258 to 261 (GAGD) contribute to the ATP site. 2 residues coordinate substrate: Asp-261 and Asp-297. Asp-261 acts as the Proton acceptor in catalysis.

Belongs to the carbohydrate kinase PfkB family.

The enzyme catalyses 2-dehydro-3-deoxy-D-gluconate + ATP = 2-dehydro-3-deoxy-6-phospho-D-gluconate + ADP + H(+). It functions in the pathway carbohydrate acid metabolism; 2-dehydro-3-deoxy-D-gluconate degradation; D-glyceraldehyde 3-phosphate and pyruvate from 2-dehydro-3-deoxy-D-gluconate: step 1/2. Catalyzes the phosphorylation of 2-keto-3-deoxygluconate (KDG) to produce 2-keto-3-deoxy-6-phosphogluconate (KDPG). This Bacillus subtilis (strain 168) protein is 2-dehydro-3-deoxygluconokinase (kdgK).